The sequence spans 382 residues: Protein delta homolog 2 (382 aa).

The first 26 residues, 1–26, serve as a signal peptide directing secretion; sequence MPSGCRCLNLVCLLCILGATSQPARA. EGF-like domains are found at residues 27–58, 62–89, 91–129, and 131–172; these read DDCS…LHCE, RMPG…KFCD, DEHI…RGCE, and KAGP…AHCE. Topologically, residues 27–305 are extracellular; sequence DDCSSHCDLA…RQESGLGESS (279 aa). Disulfide bonds link C29–C40, C33–C46, C48–C57, C66–C71, C79–C88, C95–C107, C101–C117, C119–C128, C135–C148, C142–C160, C162–C171, C178–C189, C183–C198, C200–C209, C216–C227, C221–C236, and C238–C247. A glycan (N-linked (GlcNAc...) asparagine) is linked at N157. The EGF-like 5; calcium-binding domain maps to 174-210; that stretch reads NVDDCLMRPCANGATCIDGINRFSCLCPEGFAGRFCT. Residues 212–248 form the EGF-like 6; calcium-binding domain; sequence NLDDCASRPCQRGARCRDRVHDFDCLCPSGYGGKTCE. A helical membrane pass occupies residues 306-326; the sequence is LVALVVFGSLTAALVLATVLL. Residues 327 to 382 are Cytoplasmic-facing; it reads TLRAWRRGICPTGPCCYPAPHYAPARQDQECQVSMLPAGFPLSPDLPPEPGKTTAL.

In terms of tissue distribution, detected in a number of tissues including lung, brain, adrenal gland, testis, adult liver, placenta, ovary and thymus. Not detected in fetal liver or in adult spleen, muscle and heart.

The protein localises to the membrane. Functionally, regulates adipogenesis. The chain is Protein delta homolog 2 (Dlk2) from Mus musculus (Mouse).